A 274-amino-acid polypeptide reads, in one-letter code: Ethanolamine ammonia-lyase small subunit (274 aa).

Val161, Glu182, and Cys211 together coordinate adenosylcob(III)alamin.

Belongs to the EutC family. As to quaternary structure, the basic unit is a heterodimer which dimerizes to form tetramers. The heterotetramers trimerize; 6 large subunits form a core ring with 6 small subunits projecting outwards. Adenosylcob(III)alamin is required as a cofactor.

The protein resides in the bacterial microcompartment. The enzyme catalyses ethanolamine = acetaldehyde + NH4(+). The protein operates within amine and polyamine degradation; ethanolamine degradation. In terms of biological role, catalyzes the deamination of various vicinal amino-alcohols to oxo compounds. Allows this organism to utilize ethanolamine as the sole source of nitrogen and carbon in the presence of external vitamin B12. This Pseudomonas fluorescens (strain ATCC BAA-477 / NRRL B-23932 / Pf-5) protein is Ethanolamine ammonia-lyase small subunit.